The following is a 407-amino-acid chain: 8-amino-7-oxononanoate synthase (407 aa).

A substrate-binding site is contributed by R24. Pyridoxal 5'-phosphate is bound at residue 111-112; sequence GF. H137 is a binding site for substrate. Positions 183, 211, and 239 each coordinate pyridoxal 5'-phosphate. The residue at position 242 (K242) is an N6-(pyridoxal phosphate)lysine. T356 lines the substrate pocket.

Belongs to the class-II pyridoxal-phosphate-dependent aminotransferase family. BioF subfamily. In terms of assembly, homodimer. Pyridoxal 5'-phosphate is required as a cofactor.

It catalyses the reaction 6-carboxyhexanoyl-[ACP] + L-alanine + H(+) = (8S)-8-amino-7-oxononanoate + holo-[ACP] + CO2. Its pathway is cofactor biosynthesis; biotin biosynthesis. In terms of biological role, catalyzes the decarboxylative condensation of pimeloyl-[acyl-carrier protein] and L-alanine to produce 8-amino-7-oxononanoate (AON), [acyl-carrier protein], and carbon dioxide. The sequence is that of 8-amino-7-oxononanoate synthase from Stenotrophomonas maltophilia (strain R551-3).